Here is a 426-residue protein sequence, read N- to C-terminus: Tol-Pal system protein TolB (426 aa).

The signal sequence occupies residues 1–24; it reads MKLKSRYTSLISVVSIFFSSMVMA.

This sequence belongs to the TolB family. In terms of assembly, the Tol-Pal system is composed of five core proteins: the inner membrane proteins TolA, TolQ and TolR, the periplasmic protein TolB and the outer membrane protein Pal. They form a network linking the inner and outer membranes and the peptidoglycan layer.

It localises to the periplasm. Functionally, part of the Tol-Pal system, which plays a role in outer membrane invagination during cell division and is important for maintaining outer membrane integrity. This is Tol-Pal system protein TolB from Haemophilus ducreyi (strain 35000HP / ATCC 700724).